Reading from the N-terminus, the 182-residue chain is Transcription termination/antitermination protein NusG (182 aa).

The protein belongs to the NusG family.

Functionally, participates in transcription elongation, termination and antitermination. In Chlamydia trachomatis serovar D (strain ATCC VR-885 / DSM 19411 / UW-3/Cx), this protein is Transcription termination/antitermination protein NusG.